Here is a 626-residue protein sequence, read N- to C-terminus: Two-component response regulator ORR24 (626 aa).

Residues 1–22 (MTVEERQGRVGGHGVSGGGGGR) form a disordered region. Residues 9-22 (RVGGHGVSGGGGGR) show a composition bias toward gly residues. In terms of domain architecture, Response regulatory spans 30–145 (RVLAVDDDPT…QLRTIWQHVI (116 aa)). At D81 the chain carries 4-aspartylphosphate. Residues 151 to 162 (DAKNRGNDDDAG) show a composition bias toward basic and acidic residues. Disordered stretches follow at residues 151–215 (DAKN…KKPR) and 402–440 (PLES…RTTN). Residues 191 to 202 (NGDDGDDSDENS) show a composition bias toward acidic residues. Residues 210 to 269 (TQKKPRVVWSVELHRKFVAAVNQLGIEKAVPKKILDLMNVENITRENVASHLQKYRLYLK) constitute a DNA-binding region (myb-like GARP). Residues 402 to 421 (PLESSNQQHLSRVHSSSADP) are compositionally biased toward polar residues.

It belongs to the ARR family. Type-B subfamily. Two-component system major event consists of a His-to-Asp phosphorelay between a sensor histidine kinase (HK) and a response regulator (RR). In plants, the His-to-Asp phosphorelay involves an additional intermediate named Histidine-containing phosphotransfer protein (HPt). This multistep phosphorelay consists of a His-Asp-His-Asp sequential transfer of a phosphate group between first a His and an Asp of the HK protein, followed by the transfer to a conserved His of the HPt protein and finally the transfer to an Asp in the receiver domain of the RR protein.

It localises to the nucleus. Transcriptional activator that binds specific DNA sequence. Functions as a response regulator involved in His-to-Asp phosphorelay signal transduction system. Phosphorylation of the Asp residue in the receiver domain activates the ability of the protein to promote the transcription of target genes. May directly activate some type-A response regulators in response to cytokinins. The protein is Two-component response regulator ORR24 of Oryza sativa subsp. japonica (Rice).